The primary structure comprises 262 residues: Sepiapterin reductase (262 aa).

N-acetylmethionine is present on Met1. NADP(+) is bound at residue 15–21 (GASRGFG). Ser33 carries the post-translational modification Phosphoserine. Residue 43–44 (RS) participates in NADP(+) binding. Position 46 is a phosphoserine; by CaMK2; in vitro (Ser46). An NADP(+)-binding site is contributed by 70–71 (DL). Substrate is bound by residues 158–159 (SL) and Tyr171. Lys175 is a binding site for NADP(+). Ser196 bears the Phosphoserine; by CaMK2; in vitro mark. Gly200 contacts substrate. 202–207 (LDTNMQ) is an NADP(+) binding site. Ser214 is subject to Phosphoserine; by CaMK2; in vitro. Residue Asp258 participates in substrate binding.

The protein belongs to the sepiapterin reductase family. Homodimer. In terms of processing, in vitro phosphorylation of Ser-46, Ser-196 and Ser-214 by CaMK2 does not change kinetic parameters.

It localises to the cytoplasm. It carries out the reaction L-erythro-7,8-dihydrobiopterin + NADP(+) = L-sepiapterin + NADPH + H(+). The catalysed reaction is (6R)-L-erythro-5,6,7,8-tetrahydrobiopterin + 2 NADP(+) = 6-pyruvoyl-5,6,7,8-tetrahydropterin + 2 NADPH + 2 H(+). In terms of biological role, catalyzes the final one or two reductions in tetra-hydrobiopterin biosynthesis to form 5,6,7,8-tetrahydrobiopterin. In Rattus norvegicus (Rat), this protein is Sepiapterin reductase (Spr).